Consider the following 31-residue polypeptide: Photosystem II reaction center protein M (31 aa).

The chain crosses the membrane as a helical span at residues 5-25; sequence ILAFIATALLILVPTAFLLII.

This sequence belongs to the PsbM family. PSII is composed of 1 copy each of membrane proteins PsbA, PsbB, PsbC, PsbD, PsbE, PsbF, PsbH, PsbI, PsbJ, PsbK, PsbL, PsbM, PsbT, PsbX, PsbY, PsbZ, Psb30/Ycf12, at least 3 peripheral proteins of the oxygen-evolving complex and a large number of cofactors. It forms dimeric complexes.

Its subcellular location is the plastid membrane. One of the components of the core complex of photosystem II (PSII). PSII is a light-driven water:plastoquinone oxidoreductase that uses light energy to abstract electrons from H(2)O, generating O(2) and a proton gradient subsequently used for ATP formation. It consists of a core antenna complex that captures photons, and an electron transfer chain that converts photonic excitation into a charge separation. This subunit is found at the monomer-monomer interface. This chain is Photosystem II reaction center protein M, found in Cuscuta exaltata (Tall dodder).